A 512-amino-acid polypeptide reads, in one-letter code: Eukaryotic translation initiation factor 3 subunit L (512 aa).

Residues 291–477 (DAFRLFESIL…GERQFTDSVD (187 aa)) enclose the PCI domain.

It belongs to the eIF-3 subunit L family. In terms of assembly, component of the eukaryotic translation initiation factor 3 (eIF-3) complex.

The protein resides in the cytoplasm. Functionally, component of the eukaryotic translation initiation factor 3 (eIF-3) complex, which is involved in protein synthesis of a specialized repertoire of mRNAs and, together with other initiation factors, stimulates binding of mRNA and methionyl-tRNAi to the 40S ribosome. The eIF-3 complex specifically targets and initiates translation of a subset of mRNAs involved in cell proliferation. This is Eukaryotic translation initiation factor 3 subunit L from Monosiga brevicollis (Choanoflagellate).